Reading from the N-terminus, the 371-residue chain is Leu/Ile/Val-binding protein homolog 2 (371 aa).

A signal peptide spans 1–23 (MKKSLFCGVCLCALVAMGGTSFA).

This sequence belongs to the leucine-binding protein family.

Component of an amino-acid transport system. The chain is Leu/Ile/Val-binding protein homolog 2 from Brucella abortus (strain 2308).